Consider the following 417-residue polypeptide: Serine hydroxymethyltransferase 4 (417 aa).

(6S)-5,6,7,8-tetrahydrofolate-binding positions include Leu-121 and 125 to 127; that span reads GHL. An N6-(pyridoxal phosphate)lysine modification is found at Lys-230. Residue 355–357 coordinates (6S)-5,6,7,8-tetrahydrofolate; that stretch reads SPF.

Belongs to the SHMT family. Homodimer. It depends on pyridoxal 5'-phosphate as a cofactor.

The protein resides in the cytoplasm. The enzyme catalyses (6R)-5,10-methylene-5,6,7,8-tetrahydrofolate + glycine + H2O = (6S)-5,6,7,8-tetrahydrofolate + L-serine. It participates in one-carbon metabolism; tetrahydrofolate interconversion. It functions in the pathway amino-acid biosynthesis; glycine biosynthesis; glycine from L-serine: step 1/1. Its function is as follows. Catalyzes the reversible interconversion of serine and glycine with tetrahydrofolate (THF) serving as the one-carbon carrier. This reaction serves as the major source of one-carbon groups required for the biosynthesis of purines, thymidylate, methionine, and other important biomolecules. Also exhibits THF-independent aldolase activity toward beta-hydroxyamino acids, producing glycine and aldehydes, via a retro-aldol mechanism. This Colwellia psychrerythraea (strain 34H / ATCC BAA-681) (Vibrio psychroerythus) protein is Serine hydroxymethyltransferase 4.